The following is a 386-amino-acid chain: Glutamate 5-kinase (386 aa).

Residue Lys-28 coordinates ATP. 3 residues coordinate substrate: Ser-68, Asp-155, and Asn-167. 187-188 contacts ATP; that stretch reads TD. Residues 294-372 form the PUA domain; that stretch reads RGRLVLDDGA…EKIESILGYI (79 aa).

The protein belongs to the glutamate 5-kinase family.

It is found in the cytoplasm. It catalyses the reaction L-glutamate + ATP = L-glutamyl 5-phosphate + ADP. It participates in amino-acid biosynthesis; L-proline biosynthesis; L-glutamate 5-semialdehyde from L-glutamate: step 1/2. Its function is as follows. Catalyzes the transfer of a phosphate group to glutamate to form L-glutamate 5-phosphate. This chain is Glutamate 5-kinase, found in Hahella chejuensis (strain KCTC 2396).